The sequence spans 145 residues: UPF0179 protein MmarC7_0952 (145 aa).

Belongs to the UPF0179 family.

This is UPF0179 protein MmarC7_0952 from Methanococcus maripaludis (strain C7 / ATCC BAA-1331).